Reading from the N-terminus, the 419-residue chain is Imidazolonepropionase (419 aa).

Fe(3+) is bound by residues His87 and His89. Zn(2+) is bound by residues His87 and His89. Residues Arg96, Tyr159, and His192 each contribute to the 4-imidazolone-5-propanoate site. Position 159 (Tyr159) interacts with N-formimidoyl-L-glutamate. Residue His257 participates in Fe(3+) binding. His257 is a Zn(2+) binding site. Gln260 lines the 4-imidazolone-5-propanoate pocket. Residue Asp332 participates in Fe(3+) binding. Asp332 is a Zn(2+) binding site. Residues Asn334 and Gly336 each coordinate N-formimidoyl-L-glutamate. Ser337 contacts 4-imidazolone-5-propanoate.

Belongs to the metallo-dependent hydrolases superfamily. HutI family. It depends on Zn(2+) as a cofactor. Fe(3+) is required as a cofactor.

Its subcellular location is the cytoplasm. It catalyses the reaction 4-imidazolone-5-propanoate + H2O = N-formimidoyl-L-glutamate. It functions in the pathway amino-acid degradation; L-histidine degradation into L-glutamate; N-formimidoyl-L-glutamate from L-histidine: step 3/3. Catalyzes the hydrolytic cleavage of the carbon-nitrogen bond in imidazolone-5-propanoate to yield N-formimidoyl-L-glutamate. It is the third step in the universal histidine degradation pathway. The sequence is that of Imidazolonepropionase from Alteromonas mediterranea (strain DSM 17117 / CIP 110805 / LMG 28347 / Deep ecotype).